A 138-amino-acid chain; its full sequence is Small ribosomal subunit protein uS11c (138 aa).

A disordered region spans residues 1–24 (MIKPIPRISSRRNGRIGSRKTGRR). A compositionally biased stretch (basic residues) spans 9-24 (SSRRNGRIGSRKTGRR).

The protein belongs to the universal ribosomal protein uS11 family. In terms of assembly, part of the 30S ribosomal subunit.

The protein resides in the plastid. It localises to the chloroplast. In Lemna minor (Common duckweed), this protein is Small ribosomal subunit protein uS11c.